Here is a 126-residue protein sequence, read N- to C-terminus: S-adenosylmethionine decarboxylase proenzyme (126 aa).

Catalysis depends on Ser-63, which acts as the Schiff-base intermediate with substrate; via pyruvic acid. Ser-63 is modified (pyruvic acid (Ser); by autocatalysis). Residue His-68 is the Proton acceptor; for processing activity of the active site. Cys-83 serves as the catalytic Proton donor; for catalytic activity.

The protein belongs to the prokaryotic AdoMetDC family. Type 1 subfamily. Heterotetramer of two alpha and two beta chains arranged as a dimer of alpha/beta heterodimers. It depends on pyruvate as a cofactor. Is synthesized initially as an inactive proenzyme. Formation of the active enzyme involves a self-maturation process in which the active site pyruvoyl group is generated from an internal serine residue via an autocatalytic post-translational modification. Two non-identical subunits are generated from the proenzyme in this reaction, and the pyruvate is formed at the N-terminus of the alpha chain, which is derived from the carboxyl end of the proenzyme. The post-translation cleavage follows an unusual pathway, termed non-hydrolytic serinolysis, in which the side chain hydroxyl group of the serine supplies its oxygen atom to form the C-terminus of the beta chain, while the remainder of the serine residue undergoes an oxidative deamination to produce ammonia and the pyruvoyl group blocking the N-terminus of the alpha chain.

It catalyses the reaction S-adenosyl-L-methionine + H(+) = S-adenosyl 3-(methylsulfanyl)propylamine + CO2. It participates in amine and polyamine biosynthesis; S-adenosylmethioninamine biosynthesis; S-adenosylmethioninamine from S-adenosyl-L-methionine: step 1/1. In terms of biological role, catalyzes the decarboxylation of S-adenosylmethionine to S-adenosylmethioninamine (dcAdoMet), the propylamine donor required for the synthesis of the polyamines spermine and spermidine from the diamine putrescine. The polypeptide is S-adenosylmethionine decarboxylase proenzyme (Syntrophomonas wolfei subsp. wolfei (strain DSM 2245B / Goettingen)).